Consider the following 173-residue polypeptide: Peptide deformylase (173 aa).

2 residues coordinate Fe cation: Cys-91 and His-133. Residue Glu-134 is part of the active site. Fe cation is bound at residue His-137.

Belongs to the polypeptide deformylase family. Fe(2+) serves as cofactor.

It catalyses the reaction N-terminal N-formyl-L-methionyl-[peptide] + H2O = N-terminal L-methionyl-[peptide] + formate. Removes the formyl group from the N-terminal Met of newly synthesized proteins. Requires at least a dipeptide for an efficient rate of reaction. N-terminal L-methionine is a prerequisite for activity but the enzyme has broad specificity at other positions. This is Peptide deformylase from Blochmanniella pennsylvanica (strain BPEN).